Here is a 765-residue protein sequence, read N- to C-terminus: Putative ankyrin repeat protein L371 (765 aa).

ANK repeat units lie at residues 60-89, 93-122, 132-161, 165-194, 198-227, 232-261, 265-295, 322-353, and 357-395; these read NGNY…RLDV, EGNS…KIIG, KGSV…NANY, DNVN…NLNA, QGST…DQNI, LDFY…NPNH, EGNT…RCRS, DGLT…NLNY, and TGNT…GKTV.

This chain is Putative ankyrin repeat protein L371, found in Acanthamoeba polyphaga mimivirus (APMV).